Reading from the N-terminus, the 115-residue chain is uncharacterized protein (115 aa).

A run of 3 helical transmembrane segments spans residues 23–43 (LVYA…LFFA), 63–83 (AMVT…VVMV), and 90–110 (NVVI…YVAA).

Its subcellular location is the cell membrane. This is an uncharacterized protein from Mycobacterium bovis (strain ATCC BAA-935 / AF2122/97).